The primary structure comprises 378 residues: Erythronate-4-phosphate dehydrogenase (378 aa).

Substrate contacts are provided by serine 45 and threonine 66. 2 residues coordinate NAD(+): aspartate 146 and threonine 175. Residue arginine 208 is part of the active site. Aspartate 232 contributes to the NAD(+) binding site. Residue glutamate 237 is part of the active site. Histidine 254 serves as the catalytic Proton donor. Residue glycine 257 coordinates NAD(+). Tyrosine 258 lines the substrate pocket.

This sequence belongs to the D-isomer specific 2-hydroxyacid dehydrogenase family. PdxB subfamily. In terms of assembly, homodimer.

Its subcellular location is the cytoplasm. It catalyses the reaction 4-phospho-D-erythronate + NAD(+) = (R)-3-hydroxy-2-oxo-4-phosphooxybutanoate + NADH + H(+). Its pathway is cofactor biosynthesis; pyridoxine 5'-phosphate biosynthesis; pyridoxine 5'-phosphate from D-erythrose 4-phosphate: step 2/5. Functionally, catalyzes the oxidation of erythronate-4-phosphate to 3-hydroxy-2-oxo-4-phosphonooxybutanoate. In Escherichia coli (strain 55989 / EAEC), this protein is Erythronate-4-phosphate dehydrogenase.